The chain runs to 179 residues: Fas apoptotic inhibitory molecule 1 (179 aa).

The residue at position 2 (threonine 2) is an N-acetylthreonine.

This sequence belongs to the FAIM1 family. In terms of tissue distribution, widely expressed, with the highest levels in brain, thymus, kidney, and spleen.

Its subcellular location is the cytoplasm. Its function is as follows. Plays a role as an inducible effector molecule that mediates Fas resistance produced by surface Ig engagement in B cells. This Mus musculus (Mouse) protein is Fas apoptotic inhibitory molecule 1 (Faim).